Here is a 226-residue protein sequence, read N- to C-terminus: Protein transport protein sec20 (226 aa).

Topologically, residues 1 to 189 (MADVLNALEE…IKSLKLSDRS (189 aa)) are cytoplasmic. Residues 53-75 (LRYEKAVQEYIRLNRRYRNKIAS) adopt a coiled-coil conformation. Position 97 is a phosphoserine (Ser97). Residues 190–210 (DYFLVVSGFGFFIFVVVYLLF) form a helical; Anchor for type IV membrane protein membrane-spanning segment. Residues 211-226 (KRIVWPILSMFLWFLR) are Lumenal-facing.

This sequence belongs to the SEC20 family. In terms of assembly, component of a SNARE complex consisting of ufe1, sec20, sec22 and use1. Interacts with tip20 through its cytoplasmic domain.

The protein localises to the endoplasmic reticulum membrane. Its function is as follows. SNARE required for targeting and fusion of Golgi-derived retrograde transport vesicles with the ER. This chain is Protein transport protein sec20, found in Schizosaccharomyces pombe (strain 972 / ATCC 24843) (Fission yeast).